The following is a 183-amino-acid chain: Dual-action ribosomal maturation protein DarP (183 aa).

This sequence belongs to the DarP family.

It is found in the cytoplasm. Functionally, member of a network of 50S ribosomal subunit biogenesis factors which assembles along the 30S-50S interface, preventing incorrect 23S rRNA structures from forming. Promotes peptidyl transferase center (PTC) maturation. The polypeptide is Dual-action ribosomal maturation protein DarP (Salmonella enteritidis PT4 (strain P125109)).